The sequence spans 751 residues: Phosphate transporter PHO1 homolog 8 (751 aa).

The 299-residue stretch at 1-299 (MKFGKEYVAQ…LRNAAKLYME (299 aa)) folds into the SPX domain. Residues 1-351 (MKFGKEYVAQ…KVTKEKHRIT (351 aa)) lie on the Cytoplasmic side of the membrane. A helical membrane pass occupies residues 352 to 372 (FSTGFFVGCTVSLVIALGLFI). At 373–392 (HARNIMGAVGHKLYMETMFP) the chain is on the extracellular side. The chain crosses the membrane as a helical span at residues 393–413 (LYSLFAFVVLHMIMYASNIYF). Topologically, residues 414 to 434 (WKRYRVNYPFIFGFKEGTELG) are cytoplasmic. The helical transmembrane segment at 435-455 (YGHVLLLSFGLGTLALCAVLV) threads the bilayer. Topologically, residues 456 to 473 (NMDMEMDPNTNDYKTITE) are extracellular. Residues 474 to 494 (LVPLFVVALVIAISVCPFNIF) traverse the membrane as a helical segment. Residues 495 to 623 (YRSSRFFFLM…FSINRGNDWK (129 aa)) are Cytoplasmic-facing. The region spanning 558–751 (KSSDVYSTFY…NYDEEEDRDS (194 aa)) is the EXS domain. A helical transmembrane segment spans residues 624 to 644 (IAAWVFSGLATFYGTYWDIVY). Residues 645–667 (DWGLLHRPSKSWLREKLLVPHKS) lie on the Extracellular side of the membrane. The chain crosses the membrane as a helical span at residues 668-688 (VYYVAMVVNVVLRLAWLQTVL). At 689 to 751 (DFNISFLHRE…NYDEEEDRDS (63 aa)) the chain is on the cytoplasmic side.

It belongs to the SYG1 (TC 2.A.94) family. As to expression, expressed in root epidermis, leaf hydathodes, trichomes and petioles, stem vascular cylinder, receptacle, stigma apex and pollen grains.

The protein localises to the cell membrane. Its function is as follows. May transport inorganic phosphate (Pi). In Arabidopsis thaliana (Mouse-ear cress), this protein is Phosphate transporter PHO1 homolog 8 (PHO1-H8).